A 419-amino-acid polypeptide reads, in one-letter code: Gamma-glutamyl phosphate reductase (419 aa).

This sequence belongs to the gamma-glutamyl phosphate reductase family.

The protein resides in the cytoplasm. It catalyses the reaction L-glutamate 5-semialdehyde + phosphate + NADP(+) = L-glutamyl 5-phosphate + NADPH + H(+). Its pathway is amino-acid biosynthesis; L-proline biosynthesis; L-glutamate 5-semialdehyde from L-glutamate: step 2/2. Its function is as follows. Catalyzes the NADPH-dependent reduction of L-glutamate 5-phosphate into L-glutamate 5-semialdehyde and phosphate. The product spontaneously undergoes cyclization to form 1-pyrroline-5-carboxylate. The chain is Gamma-glutamyl phosphate reductase from Caulobacter sp. (strain K31).